The sequence spans 369 residues: Biglycan (369 aa).

An N-terminal signal peptide occupies residues 1 to 16; that stretch reads MWPLWLVASLLALSQA. Positions 17–37 are excised as a propeptide; the sequence is LPFEQKGFWDFTLDDGLPMLN. 2 O-linked (Xyl...) (glycosaminoglycan) serine glycosylation sites follow: Ser-42 and Ser-48. 2 disulfide bridges follow: Cys-64–Cys-70 and Cys-68–Cys-77. LRR repeat units lie at residues 83–103, 104–127, 128–151, 152–172, 173–196, 197–221, 222–242, 243–266, 267–290, 291–313, 314–343, and 344–369; these read KAVPKEISPDTMLLDLQNNDI, SELRADDFKGLHHLYALVLVNNKI, SKIHEKAFSPLRKLQKLYISKNHL, VEIPPNLPSSLVELRIHDNRI, RKVPKGVFSGLRNMNCIEMGGNPL, ENSGFEPGAFDGLKLNYLRISEAKL, TGIPKDLPETLNELHLDHNKI, QAIELEDLLRYSKLYRLGLGHNQI, RMIENGSLSFLPTLRELHLDNNKL, SRVPSGLPDLKLLQVVYLHTNNI, TKVGVNDFCPVGFGVKRAYYNGISLFNNPV, and PYWEVQPATFRCVTDRLAIQFGNYKK. N-linked (GlcNAc...) asparagine glycans are attached at residues Asn-271 and Asn-312. Cysteines 322 and 355 form a disulfide.

Belongs to the small leucine-rich proteoglycan (SLRP) family. SLRP class I subfamily. In terms of assembly, homodimer. Forms a ternary complex with MFAP2 and ELN. The two attached glycosaminoglycan chains can be either chondroitin sulfate or dermatan sulfate.

It is found in the secreted. The protein resides in the extracellular space. The protein localises to the extracellular matrix. In terms of biological role, may be involved in collagen fiber assembly. The polypeptide is Biglycan (BGN) (Canis lupus familiaris (Dog)).